Reading from the N-terminus, the 104-residue chain is ATP-dependent Clp protease adapter protein ClpS (104 aa).

It belongs to the ClpS family. Binds to the N-terminal domain of the chaperone ClpA.

In terms of biological role, involved in the modulation of the specificity of the ClpAP-mediated ATP-dependent protein degradation. In Paraburkholderia phymatum (strain DSM 17167 / CIP 108236 / LMG 21445 / STM815) (Burkholderia phymatum), this protein is ATP-dependent Clp protease adapter protein ClpS.